An 802-amino-acid chain; its full sequence is Protein SBE22 (802 aa).

2 disordered regions span residues 207 to 230 and 323 to 345; these read SSTI…RSNS and SGDP…QRHN.

This sequence belongs to the SBE2 family.

The protein localises to the cytoplasm. It localises to the golgi apparatus. In terms of biological role, with SBE2, is involved in cell wall integrity and polarity processes like bud growth. This Vanderwaltozyma polyspora (strain ATCC 22028 / DSM 70294 / BCRC 21397 / CBS 2163 / NBRC 10782 / NRRL Y-8283 / UCD 57-17) (Kluyveromyces polysporus) protein is Protein SBE22 (SBE22).